The primary structure comprises 201 residues: E3 ubiquitin-protein ligase LAP (201 aa).

The Cytoplasmic segment spans residues 1 to 92 (MSTIVDMVDV…RDCHDSLLVN (92 aa)). The RING-CH-type zinc finger occupies 9-69 (DVSLVDKCCW…AICETPYNVK (61 aa)). Residues Cys-17, Cys-20, Cys-31, Cys-33, His-41, Cys-44, Cys-59, and Cys-62 each contribute to the Zn(2+) site. The helical transmembrane segment at 93-113 (LPLCLIVGGISTYTLVSVEII) threads the bilayer. Residues 114-123 (KLMESEETSE) lie on the Lumenal side of the membrane. Residues 124 to 144 (LTKVFLVTSFLGPFIVTVLSA) form a helical membrane-spanning segment. The Cytoplasmic segment spans residues 145–201 (LRTCIDCRTYFLTTRKRNTIHTLQELEDDDDDDDDDDDDDDEEYADAVEEIIIGPSN). The disordered stretch occupies residues 168-188 (QELEDDDDDDDDDDDDDDEEY). Residues 169–188 (ELEDDDDDDDDDDDDDDEEY) show a composition bias toward acidic residues.

The protein belongs to the poxviridae LAP protein family.

Its subcellular location is the host membrane. It localises to the host Golgi apparatus. The protein resides in the host trans-Golgi network membrane. It is found in the host early endosome membrane. The enzyme catalyses S-ubiquitinyl-[E2 ubiquitin-conjugating enzyme]-L-cysteine + [acceptor protein]-L-lysine = [E2 ubiquitin-conjugating enzyme]-L-cysteine + N(6)-ubiquitinyl-[acceptor protein]-L-lysine.. In terms of biological role, E3 ubiquitin-protein ligase which promotes ubiquitination and subsequent degradation of host MHC-I and CD4 molecules, presumably to prevent lysis of infected cells by cytotoxic T-lymphocytes and NK cell. Binds target molecules through transmembrane interaction. The result of this ubiquitination is the enhancement of the endocytosis of the target chain and the delivery to the lysosome, where it is proteolytically destroyed. This chain is E3 ubiquitin-protein ligase LAP, found in Oryctolagus cuniculus (Rabbit).